A 1064-amino-acid polypeptide reads, in one-letter code: Leucine--tRNA ligase (1064 aa).

The interval Met1 to Thr25 is disordered. The short motif at Pro106–His117 is the 'HIGH' region element. The disordered stretch occupies residues Gly435 to Ala456. The 'KMSKS' region motif lies at Lys831–Ser835. Lys834 serves as a coordination point for ATP.

Belongs to the class-I aminoacyl-tRNA synthetase family.

It localises to the cytoplasm. The enzyme catalyses tRNA(Leu) + L-leucine + ATP = L-leucyl-tRNA(Leu) + AMP + diphosphate. In Frankia casuarinae (strain DSM 45818 / CECT 9043 / HFP020203 / CcI3), this protein is Leucine--tRNA ligase.